The following is an 811-amino-acid chain: Transmembrane protease serine 6 (811 aa).

Residues 1–48 (MPRCFQLPCSTRMPTTEVPQAADGQGDAGDGEEAAEPEGKFKPPKNTK) are disordered. The Cytoplasmic portion of the chain corresponds to 1–59 (MPRCFQLPCSTRMPTTEVPQAADGQGDAGDGEEAAEPEGKFKPPKNTKRKNRDYVRFTP). Residues 8 to 18 (PCSTRMPTTEV) show a composition bias toward polar residues. The helical; Signal-anchor for type II membrane protein transmembrane segment at 60-80 (LLLVLAALVSAGVMLWYFLGY) threads the bilayer. The Extracellular segment spans residues 81–811 (KAEVTVSQVY…VINWIQQVLT (731 aa)). One can recognise an SEA domain in the interval 86 to 209 (VSQVYSGSLR…EGLVILEASV (124 aa)). N-linked (GlcNAc...) asparagine glycans are attached at residues Asn138, Asn184, Asn216, Asn338, Asn433, and Asn453. 2 consecutive CUB domains span residues 213-336 (VVLN…QDCQ) and 323-440 (FLLS…QISL). The cysteines at positions 335 and 366 are disulfide-linked. LDL-receptor class A domains lie at 445 to 477 (VQVY…CDGI), 478 to 514 (KDCP…DRQP), and 518 to 555 (NGSD…DGQS). Intrachain disulfides connect Cys458/Cys470, Cys464/Cys480, Cys474/Cys489, Cys491/Cys503, Cys497/Cys516, Cys510/Cys525, Cys531/Cys543, Cys538/Cys557, Cys551/Cys566, and Cys602/Cys618. Asn518 is a glycosylation site (N-linked (GlcNAc...) asparagine). In terms of domain architecture, Peptidase S1 spans 577–811 (IVGGTVSSEG…VINWIQQVLT (235 aa)). Active-site charge relay system residues include His617 and Asp668. Intrachain disulfides connect Cys702–Cys768, Cys733–Cys747, and Cys758–Cys787. Catalysis depends on Ser762, which acts as the Charge relay system.

The protein belongs to the peptidase S1 family. As to quaternary structure, interacts with HJV. The single-chain zymogen undergoes autoproteolytic processing. This results in TMPRSS6 shedding from the cell surface and conversion into an activated two-chains form which is released extracellularly. The process involves a trans-activation mechanism that requires TMPRSS6 oligomerization. Expressed at highest levels in adult mice liver, kidney and uterus. Also strongly expressed within the nasal cavity by olfactory epithelial cells. A weak, but detectable, signal in adult mice tissues analyzed including brain, lung, heart, kidney, spleen, muscle, intestine, thymus and pancreas. No signal in residual embryonic yolk sac, developing kidney tubules or in embryonic tissues analyzed including lung, heart, gastrointestinal tract and epithelium of the oral cavity.

The protein resides in the cell membrane. Its function is as follows. Membrane-bound serine protease. Through the cleavage of cell surface HJV, a regulator of the expression of the iron absorption-regulating hormone hepicidin/HAMP, plays a role in iron homeostasis. The sequence is that of Transmembrane protease serine 6 (Tmprss6) from Mus musculus (Mouse).